The primary structure comprises 96 residues: Large ribosomal subunit protein bL27 (96 aa).

Positions 1-9 (MLRLDLQFF) are excised as a propeptide. Positions 1-36 (MLRLDLQFFSTKKGQGSSKNGRDSESKRLGSKRADG) are disordered. The span at 8-19 (FFSTKKGQGSSK) shows a compositional bias: polar residues. Residues 20 to 35 (NGRDSESKRLGSKRAD) show a composition bias toward basic and acidic residues.

Belongs to the bacterial ribosomal protein bL27 family. Post-translationally, the N-terminus is cleaved by ribosomal processing cysteine protease Prp.

The chain is Large ribosomal subunit protein bL27 from Oceanobacillus iheyensis (strain DSM 14371 / CIP 107618 / JCM 11309 / KCTC 3954 / HTE831).